The primary structure comprises 500 residues: 4-alpha-glucanotransferase (500 aa).

This sequence belongs to the disproportionating enzyme family.

The protein localises to the cytoplasm. The enzyme catalyses Transfers a segment of a (1-&gt;4)-alpha-D-glucan to a new position in an acceptor, which may be glucose or a (1-&gt;4)-alpha-D-glucan.. This chain is 4-alpha-glucanotransferase (malQ), found in Thermus thermophilus.